The following is a 383-amino-acid chain: Arginine biosynthesis bifunctional protein ArgJ (383 aa).

6 residues coordinate substrate: T146, K168, T179, E259, N378, and S383. The active-site Nucleophile is T179.

Belongs to the ArgJ family. In terms of assembly, heterotetramer of two alpha and two beta chains.

Its subcellular location is the cytoplasm. It catalyses the reaction N(2)-acetyl-L-ornithine + L-glutamate = N-acetyl-L-glutamate + L-ornithine. The enzyme catalyses L-glutamate + acetyl-CoA = N-acetyl-L-glutamate + CoA + H(+). The protein operates within amino-acid biosynthesis; L-arginine biosynthesis; L-ornithine and N-acetyl-L-glutamate from L-glutamate and N(2)-acetyl-L-ornithine (cyclic): step 1/1. Its pathway is amino-acid biosynthesis; L-arginine biosynthesis; N(2)-acetyl-L-ornithine from L-glutamate: step 1/4. Its function is as follows. Catalyzes two activities which are involved in the cyclic version of arginine biosynthesis: the synthesis of N-acetylglutamate from glutamate and acetyl-CoA as the acetyl donor, and of ornithine by transacetylation between N(2)-acetylornithine and glutamate. The polypeptide is Arginine biosynthesis bifunctional protein ArgJ (Streptomyces avermitilis (strain ATCC 31267 / DSM 46492 / JCM 5070 / NBRC 14893 / NCIMB 12804 / NRRL 8165 / MA-4680)).